A 167-amino-acid chain; its full sequence is Ubiquitin-fold modifier-conjugating enzyme 1 (167 aa).

The Glycyl thioester intermediate role is filled by cysteine 116.

It belongs to the ubiquitin-conjugating enzyme family. UFC1 subfamily. In terms of assembly, interacts with UBA5 (via C-terminus). Interacts with UFL1. Interacts with UFM1.

Its function is as follows. E2-like enzyme which specifically catalyzes the second step in ufmylation. Accepts the ubiquitin-like modifier UFM1 from the E1 enzyme UBA5 and forms an intermediate with UFM1 via a thioester linkage. Ufmylation is involved in various processes, such as ribosome recycling, response to DNA damage, interferon response or reticulophagy (also called ER-phagy). The chain is Ubiquitin-fold modifier-conjugating enzyme 1 from Salmo salar (Atlantic salmon).